Reading from the N-terminus, the 355-residue chain is Serine acetyltransferase 4 (355 aa).

Belongs to the transferase hexapeptide repeat family. As to quaternary structure, homomultimer. In terms of tissue distribution, localized in vascular tissues, particularly in phloem.

It localises to the cytoplasm. It carries out the reaction L-serine + acetyl-CoA = O-acetyl-L-serine + CoA. It functions in the pathway amino-acid biosynthesis; L-cysteine biosynthesis; L-cysteine from L-serine: step 1/2. Feedback inhibitions by L-Ser and acetyl-CoA. This chain is Serine acetyltransferase 4, found in Arabidopsis thaliana (Mouse-ear cress).